The chain runs to 74 residues: MDLSVKSQENVEHMVEAIKEKLRMVNAGAMKAANFDEDMYEDLRDIYDHVMKRETFSISEMQAITEELGTLMKK.

It belongs to the UPF0435 family.

The polypeptide is UPF0435 protein Bcer98_0391 (Bacillus cytotoxicus (strain DSM 22905 / CIP 110041 / 391-98 / NVH 391-98)).